Here is a 473-residue protein sequence, read N- to C-terminus: UDP-N-acetylmuramoylalanine--D-glutamate ligase (473 aa).

120–126 (GSNGKTT) serves as a coordination point for ATP.

This sequence belongs to the MurCDEF family.

Its subcellular location is the cytoplasm. It catalyses the reaction UDP-N-acetyl-alpha-D-muramoyl-L-alanine + D-glutamate + ATP = UDP-N-acetyl-alpha-D-muramoyl-L-alanyl-D-glutamate + ADP + phosphate + H(+). Its pathway is cell wall biogenesis; peptidoglycan biosynthesis. Cell wall formation. Catalyzes the addition of glutamate to the nucleotide precursor UDP-N-acetylmuramoyl-L-alanine (UMA). The polypeptide is UDP-N-acetylmuramoylalanine--D-glutamate ligase (Nitrosospira multiformis (strain ATCC 25196 / NCIMB 11849 / C 71)).